Here is a 256-residue protein sequence, read N- to C-terminus: E3 ubiquitin-protein ligase MIR2 (256 aa).

Over 1-83 (MASKDVEEGV…NLWPEMERQE (83 aa)) the chain is Cytoplasmic. The segment at 7-66 (EEGVEGPICWICREEVGNEGIHPCACTGELDVVHPQCLSTWLTVSRNTACQMCRVIYRTR) adopts an RING-CH-type zinc-finger fold. Cysteine 15, cysteine 18, cysteine 30, cysteine 32, histidine 40, cysteine 43, cysteine 56, and cysteine 59 together coordinate Zn(2+). The helical transmembrane segment at 84–104 (IFELFLLMSVVVAGLVGVALC) threads the bilayer. Over 105 to 124 (TWTLLVILTAPAGTFSPGAV) the chain is Extracellular. A helical transmembrane segment spans residues 125 to 145 (LGFLCFFGFYQIFIVFAFGGI). Over 146 to 256 (CRVSGTVRAL…VRKNHPKNNG (111 aa)) the chain is Cytoplasmic. Positions 179–256 (DNIELTVLVG…VRKNHPKNNG (78 aa)) are disordered. Over residues 193–203 (TDEEPTDESSE) the composition is skewed to acidic residues. Basic residues predominate over residues 245–256 (KPVRKNHPKNNG).

In terms of assembly, binds human MHC-I, CD86, ICAM1 and CD1D.

Its subcellular location is the host cell membrane. The protein localises to the host endoplasmic reticulum. The enzyme catalyses S-ubiquitinyl-[E2 ubiquitin-conjugating enzyme]-L-cysteine + [acceptor protein]-L-lysine = [E2 ubiquitin-conjugating enzyme]-L-cysteine + N(6)-ubiquitinyl-[acceptor protein]-L-lysine.. It participates in protein modification; protein ubiquitination. Functionally, membrane-bound E3 ubiquitin ligase expressed at the immediate early stage of viral reactivation to mediate polyubiquitination of various host membrane proteins related to the immune response. Promotes ubiquitination and subsequent degradation of host MHC-I, CD86, DC-SIGN and DC-SIGNR, ICAM1 and CD1D molecules, presumably to prevent lysis of infected cells by cytotoxic T-lymphocytes and NK cell. Plays a role in the down-regulation of the host stress-induced NKG2D ligands MICA, MICB and CLEC2B, which enable immune cells expressing the NKG2D receptor to recognize and annihilate infected cells prior to viral spread. Alters monocyte metabolism and proliferation by mediating rapid internalization of cellular growth factor-binding receptor tyrosine kinases from the surface leading to increased signaling. The sequence is that of E3 ubiquitin-protein ligase MIR2 (K5) from Homo sapiens (Human).